The chain runs to 1396 residues: MAEVSVQRILLLVVSLAKCLEGTKLLAHLKKCGDLECETLISRVLALRDYTGPDCRYLNFTTGEEISVYVKLGGDREDLWAGSKGKDFGFFPRDAVEIEEVFISEEVEMPTKSDFLCLLGEGYIFGSEQSELNSEDDEEHMYPYEKDEDQNYNIYEGDFQPEPDLYAAAEGTLLEDQIPASEAPDDFRFSSEWKAWEGAGSQGGGEQDYTADSDQDLPSLSKPERQGWFGLGTEEAEEKVFESDTEPTQELALEEESDLEKLHSGEPQVELEQEPKSETLEFSSVPDEEYELESETESILKPQASGWFGEGLTSYLGFGNEEAGLELLSKESNPPLQDIPSSVPPDEEVPAPCREISTDKEDAVINDSSVLSPSWFYYGFGMLGFTNADEDNIVSDKGENEDGEVDNLKHPIGSDFDPEKEQERKIVTVETEDQAGTESVLEKTDESGSMQYLKKFFDNPWGFQSLPEDTELPFSKKMLDQDDIVENDKIEELSTENSPTGSMKDPVMLASRYVLSDIDSEVELPMEEHEGVHFKPSSSKRNEDDSNSWADPEELSVAQTDGSAEGALLDTQLVSPKEHAADFQLLKYLLQIDVYGFMSSALSPIEILLESVVAALPEDMRADFNPSGFSLELAVCVLSVGLLAVVLFLWRGFRSIRSRFYVGREKKLALELSALIEEKCKLLDKVSIVQKEYEGLESSLKEASFEKESTEAQSLEFVEGSQISEATYENLEQSKSKLEDEILLLEEKLEEERAKHSEQDELMADISKRIQSLEDESKSLKSQVAEAKTTFRIFEINEERLKGAIKDALNENSQLQESQKQLLQETEMMKEQVNDLDKQKVALEESRAQAEQALSEKESQIETLVTSLLKMKDWAAVLGEADDGNLDLDMKSGLENTAALDNQPKGALKKLIYAAKLNASLKALEGERNQVYTQLSEVDQVKEDLTEHIKSLESKQASLQSEKTEFESESQKLQQKLKVITELYQENEMKLHRKLTVEENYRLEKEEKLSKVDEKISHATEELETCRQRAKDLEEELERTIHSYQGQVISHEKKAHDNWLAARTLERNLNDLRKENAHNRQKLTETEFKFELLEKDPYALDVPNTAFGREHSPYGPSPLGRPPSETRAFLSPPTLLEGPLRLSPLLPGGGGRGSRGPENLLDHQMNTERGESSYDRLSDAPRAPSDRSLSPPWEQDRRMTAHPPPGQPYSDPALQRQDRFYPNSGRLSGPAELRSYNMPSLDKVDGPVPSEMESSGNGTKDNLGNSNVPDSPIPAECEAAGRGFFPPPFPPVRDPLFPVDPRSQFMRRGPSFPPPPPGSIYAAPRDYFPPRDFPGPPLPPFPGRTVYAPRGFPPYLPPRAGFFPPPPHPESRSELPPDLIPPSKEPAADPPETQEA.

A signal peptide spans 1–22 (MAEVSVQRILLLVVSLAKCLEG). Topologically, residues 23–604 (TKLLAHLKKC…YGFMSSALSP (582 aa)) are lumenal. In terms of domain architecture, SH3 spans 39-101 (TLISRVLALR…PRDAVEIEEV (63 aa)). Asn59 carries an N-linked (GlcNAc...) asparagine glycan. Disordered regions lie at residues 197-288 (EGAG…VPDE) and 331-361 (ESNP…TDKE). Residues 243 to 258 (SDTEPTQELALEEESD) are compositionally biased toward acidic residues. Asn366 is a glycosylation site (N-linked (GlcNAc...) asparagine). Disordered regions lie at residues 396–421 (DKGE…PEKE) and 525–557 (PMEE…ELSV). The stretch at 605–625 (IEILLESVVAALPEDMRADFN) is an intramembrane region. The Lumenal portion of the chain corresponds to 626-628 (PSG). A helical membrane pass occupies residues 629–649 (FSLELAVCVLSVGLLAVVLFL). Over 650-1396 (WRGFRSIRSR…AADPPETQEA (747 aa)) the chain is Cytoplasmic. The mediates interaction with MIA3 stretch occupies residues 651–1243 (RGFRSIRSRF…RSYNMPSLDK (593 aa)). Coiled-coil stretches lie at residues 693-867 (YEGL…LVTS) and 914-1082 (AAKL…NRQK). A disordered region spans residues 1103–1396 (PNTAFGREHS…AADPPETQEA (294 aa)). The segment at 1105–1396 (TAFGREHSPY…AADPPETQEA (292 aa)) is proline-rich domain (PRD); probably mediates interaction with COPII coat subunits. The span at 1135–1146 (LLEGPLRLSPLL) shows a compositional bias: low complexity. Residues 1165-1179 (MNTERGESSYDRLSD) are compositionally biased toward basic and acidic residues. The segment covering 1252–1269 (MESSGNGTKDNLGNSNVP) has biased composition (polar residues). 2 stretches are compositionally biased toward pro residues: residues 1331-1342 (RDFPGPPLPPFP) and 1351-1368 (GFPP…PPPH).

The protein belongs to the MIA/OTOR family. Interacts with MIA3. Interacts with the COPII coat subunits SEC23A, SEC23B and maybe SEC24C. Interacts with PREB; recruits PREB to endoplasmic reticulum exit sites. Interacts with APOB. In terms of tissue distribution, isoform 1 is expressed in liver (at protein level). Isoform 2 is highly expressed in liver and weakly in testis.

Its subcellular location is the endoplasmic reticulum membrane. Functionally, plays a role in the transport of cargos that are too large to fit into COPII-coated vesicles and require specific mechanisms to be incorporated into membrane-bound carriers and exported from the endoplasmic reticulum. Plays a role in the secretion of lipoproteins, pre-chylomicrons and pre-VLDLs, by participating in their export from the endoplasmic reticulum. Thereby, may play a role in cholesterol and triglyceride homeostasis. Required for collagen VII (COL7A1) secretion by loading COL7A1 into transport carriers and recruiting PREB/SEC12 at the endoplasmic reticulum exit sites. This is Melanoma inhibitory activity protein 2 from Mus musculus (Mouse).